A 427-amino-acid chain; its full sequence is GPI mannosyltransferase 2 (427 aa).

Helical transmembrane passes span 7–27 (LTTVFFTVKLVQYLLVYFAPG), 119–139 (ATLLNLVLHYVSVWLLYALTL), 164–184 (FLLAPYSEPLSFAFSFLGMLL), 197–217 (ITLAWYNWLPYTLSGICFSVA), 247–267 (AVLFPCIAGSMMLGIFAYMHY), 318–338 (VPNFLFALPNLVILWYSTVYF), 350–370 (LVYITRALLLIITFFAHVQII), and 404–424 (LYVNWLILWIPLQTVLFACFL).

Belongs to the PIGV family.

The protein resides in the endoplasmic reticulum membrane. It participates in glycolipid biosynthesis; glycosylphosphatidylinositol-anchor biosynthesis. Functionally, mannosyltransferase involved in glycosylphosphatidylinositol-anchor biosynthesis. Transfers the second mannose to the glycosylphosphatidylinositol during GPI precursor assembly. The chain is GPI mannosyltransferase 2 (GPI18) from Eremothecium gossypii (strain ATCC 10895 / CBS 109.51 / FGSC 9923 / NRRL Y-1056) (Yeast).